A 125-amino-acid polypeptide reads, in one-letter code: MYSGICSCLFLAVLSSSSLGQQISGSQHANPAVTDLEQSLLENHRHTRIPTSGRPIQLVDGSIDQKANLGALLAKYLQQARRGSTGKASVMGLQNFDPTHRIKDRDYMGWMDFGRRSAEEYEYSS.

The N-terminal stretch at 1 to 20 (MYSGICSCLFLAVLSSSSLG) is a signal peptide. Positions 21–105 (QQISGSQHAN…FDPTHRIKDR (85 aa)) are excised as a propeptide. At Y107 the chain carries Sulfotyrosine. At F113 the chain carries Phenylalanine amide. Residues 114-125 (GRRSAEEYEYSS) constitute a propeptide that is removed on maturation.

This sequence belongs to the gastrin/cholecystokinin family.

It localises to the secreted. Functionally, hypotensive neuropeptide that binds cholecystokinin receptors (CCKAR). This Python molurus (Indian python) protein is Cholecystokinin-8 (CCK).